The sequence spans 146 residues: Cystatin-C (146 aa).

The signal sequence occupies residues 1 to 26 (MAGPLRAPLLLLAILAVALALSPAAG). At Ser43 the chain carries Phosphoserine. The Secondary area of contact signature appears at 81–85 (QIVAG). Disulfide bonds link Cys99–Cys109 and Cys123–Cys143.

It belongs to the cystatin family.

Its subcellular location is the secreted. Functionally, as an inhibitor of cysteine proteinases, this protein is thought to serve an important physiological role as a local regulator of this enzyme activity. This Saimiri sciureus (Common squirrel monkey) protein is Cystatin-C (CST3).